Reading from the N-terminus, the 203-residue chain is Translation initiation factor IF-3 (203 aa).

Belongs to the IF-3 family. As to quaternary structure, monomer.

The protein localises to the cytoplasm. Functionally, IF-3 binds to the 30S ribosomal subunit and shifts the equilibrium between 70S ribosomes and their 50S and 30S subunits in favor of the free subunits, thus enhancing the availability of 30S subunits on which protein synthesis initiation begins. The protein is Translation initiation factor IF-3 of Corynebacterium efficiens (strain DSM 44549 / YS-314 / AJ 12310 / JCM 11189 / NBRC 100395).